The chain runs to 164 residues: Cytochrome c oxidase subunit 4, mitochondrial (164 aa).

The N-terminal 33 residues, 1–33 (MFMNSMLRVSRQRAAVRSTVSLYRGFVSASIRR), are a transit peptide targeting the mitochondrion. 4 residues coordinate Zn(2+): C120, H128, C143, and C146.

This sequence belongs to the cytochrome c oxidase subunit 5B family. As to quaternary structure, component of the cytochrome c oxidase (complex IV, CIV), a multisubunit enzyme composed of a catalytic core of 3 subunits and several supernumerary subunits. The complex exists as a monomer or a dimer and forms supercomplexes (SCs) in the inner mitochondrial membrane with ubiquinol-cytochrome c oxidoreductase (cytochrome b-c1 complex, complex III, CIII).

Its subcellular location is the mitochondrion inner membrane. It functions in the pathway energy metabolism; oxidative phosphorylation. Functionally, component of the cytochrome c oxidase, the last enzyme in the mitochondrial electron transport chain which drives oxidative phosphorylation. The respiratory chain contains 3 multisubunit complexes succinate dehydrogenase (complex II, CII), ubiquinol-cytochrome c oxidoreductase (cytochrome b-c1 complex, complex III, CIII) and cytochrome c oxidase (complex IV, CIV), that cooperate to transfer electrons derived from NADH and succinate to molecular oxygen, creating an electrochemical gradient over the inner membrane that drives transmembrane transport and the ATP synthase. Cytochrome c oxidase is the component of the respiratory chain that catalyzes the reduction of oxygen to water. Electrons originating from reduced cytochrome c in the intermembrane space (IMS) are transferred via the dinuclear copper A center (CU(A)) of subunit 2 and heme A of subunit 1 to the active site in subunit 1, a binuclear center (BNC) formed by heme A3 and copper B (CU(B)). The BNC reduces molecular oxygen to 2 water molecules using 4 electrons from cytochrome c in the IMS and 4 protons from the mitochondrial matrix. The protein is Cytochrome c oxidase subunit 4, mitochondrial (cox4) of Schizosaccharomyces pombe (strain 972 / ATCC 24843) (Fission yeast).